Here is a 621-residue protein sequence, read N- to C-terminus: Polycystin-2-like protein 2 (621 aa).

Over 1–31 (MSEATWWYRGGTSKHDLHYRREAEVNTTLEE) the chain is Cytoplasmic. A helical transmembrane segment spans residues 32 to 52 (LLLYFIFLINLCILTFGMVNP). Residues 53–277 (HMYYLNKVMS…SVKLLRYVSY (225 aa)) are Extracellular-facing. N-linked (GlcNAc...) asparagine glycosylation is found at asparagine 115 and asparagine 138. The helical transmembrane segment at 278–298 (YDYFIASCEVIFCIFLFVFII) threads the bilayer. The Cytoplasmic portion of the chain corresponds to 299–314 (QELRKVNEFKSAYFRS). A helical transmembrane segment spans residues 315-335 (VWNWLEMLLLLLCFLAVSFYA). Residues 336 to 360 (YCNMQSFLLLGQLLKNTDSYPDFYF) are Extracellular-facing. Residues 361 to 381 (LAYWHIYYNNVIAITIFFAWI) form a helical membrane-spanning segment. Residues 382 to 406 (KIFKFISFNETMSQLSSTLSRCMKD) are Cytoplasmic-facing. The helical transmembrane segment at 407–427 (IVGFAIMFFIIFSAYAQLGFL) threads the bilayer. Topologically, residues 428–468 (VFGSQVDDFSTFQNSIFAQFRIVLGDFNFAGIQQANWILGP) are extracellular. Residues 469–489 (IYFITFIFFVFFVLLNMFLAI) form a helical membrane-spanning segment. Over 490–621 (INDTYSEVKA…KLNQLMRKLH (132 aa)) the chain is Cytoplasmic. Residues 521–551 (NVLEKLRLKKAQAKEEKKMQTTDLAQRARRD) are a coiled coil.

This sequence belongs to the polycystin family. In terms of assembly, interacts with TRPC1 and TRPC5. As to expression, expressed only in testis and heart.

It is found in the membrane. Exhibits a lower single conductance but no spontaneous channel activity. May function as a regulator of calcium channels or a channel component involving Ca2(+) homeostasis. The polypeptide is Polycystin-2-like protein 2 (Mus musculus (Mouse)).